Reading from the N-terminus, the 163-residue chain is Putative pre-16S rRNA nuclease (163 aa).

This sequence belongs to the YqgF nuclease family.

It is found in the cytoplasm. Its function is as follows. Could be a nuclease involved in processing of the 5'-end of pre-16S rRNA. This is Putative pre-16S rRNA nuclease from Zymomonas mobilis subsp. mobilis (strain ATCC 31821 / ZM4 / CP4).